The primary structure comprises 88 residues: Small ribosomal subunit protein uS17 (88 aa).

Belongs to the universal ribosomal protein uS17 family. In terms of assembly, part of the 30S ribosomal subunit.

One of the primary rRNA binding proteins, it binds specifically to the 5'-end of 16S ribosomal RNA. The sequence is that of Small ribosomal subunit protein uS17 from Yersinia pseudotuberculosis serotype O:1b (strain IP 31758).